The sequence spans 402 residues: Multidrug resistance protein MdtH (402 aa).

At 1 to 12 (MSRVSQARNLGK) the chain is on the cytoplasmic side. Residues 13–33 (YFLLIDNMLVVLGFFVVFPLI) form a helical membrane-spanning segment. Topologically, residues 34-98 (SIRFVDQMGW…GFATMGIAHE (65 aa)) are periplasmic. The helical transmembrane segment at 99-116 (PWLLWFSCLLSGLGGTLF) threads the bilayer. Residues 117-138 (DPPRSALVVKLIRPQQRCRFFS) lie on the Cytoplasmic side of the membrane. A helical membrane pass occupies residues 139 to 159 (LLMMQDSAGAVIGALLGSWLL). Residues 160–164 (QYDFR) lie on the Periplasmic side of the membrane. A helical membrane pass occupies residues 165–185 (LVCATGAVLFVLCAAFNAWLL). At 186–213 (PAWKLSTVRTPVREGMTRVMRDKRFVTY) the chain is on the cytoplasmic side. The chain crosses the membrane as a helical span at residues 214–234 (VLTLAGYYMLAVQVMLMLPIM). Over 235 to 243 (VNDVAGAPS) the chain is Periplasmic. Residues 244–264 (AVKWMYAIEACLSLTLLYPIA) traverse the membrane as a helical segment. Residues 265 to 276 (RWSEKHFRLEHR) lie on the Cytoplasmic side of the membrane. A helical membrane pass occupies residues 277-297 (LMAGLLIMSLSMMPVGMVSGL). At 298 to 299 (QQ) the chain is on the periplasmic side. A helical transmembrane segment spans residues 300–320 (LFTLICLFYIGSIIAEPARET). Over 321 to 339 (LSALLADARARGSYMGFSR) the chain is Cytoplasmic. The chain crosses the membrane as a helical span at residues 340–360 (LGLAIGGAIGYIGGGWLFDLG). The Periplasmic segment spans residues 361–367 (KSAHQPE). The chain crosses the membrane as a helical span at residues 368-388 (LPWMMLGIIGIFTFLALGWQF). At 389–402 (SQKRATRRLLERDA) the chain is on the cytoplasmic side.

Belongs to the major facilitator superfamily. DHA1 family. MdtH (TC 2.A.1.2.21) subfamily.

Its subcellular location is the cell inner membrane. This Shigella sonnei (strain Ss046) protein is Multidrug resistance protein MdtH.